Reading from the N-terminus, the 582-residue chain is Semenogelin-2 (582 aa).

A signal peptide spans 1–23; the sequence is MKSIILFVLSLLLILEKQAAVMG. Disordered regions lie at residues 25–65, 91–157, 171–192, 272–366, and 393–557; these read KGGS…SSSI, HKTT…GISS, LSKEQASASGAQKGRTQGGSQS, NLNQ…KDIQ, and SNQD…HNTV. Over residues 50-59 the composition is skewed to basic and acidic residues; the sequence is GQKDKQHTES. The span at 111 to 134 shows a compositional bias: basic residues; it reads QKGRDHVKPKRHFRLIVIHRKGGQ. 2 stretches are compositionally biased toward polar residues: residues 137 to 157 and 174 to 192; these read HGTQNPSQNQGNSPSGKGISS and EQASASGAQKGRTQGGSQS. Positions 293–310 are enriched in basic and acidic residues; the sequence is TEERQFNHGEKSVQKDVP. Positions 325–335 are enriched in polar residues; sequence KSQNQVSIPSQ. Composition is skewed to basic and acidic residues over residues 336–345, 353–366, 396–405, and 413–426; these read DQEHGHKENK, TEERRLNCGEKDIQ, and TEERRLNGGEKDIQ. 2 stretches are compositionally biased toward polar residues: residues 427 to 437 and 445 to 455; these read KSVSKGSISIQ and KSQNQVTIPSQ. A compositionally biased stretch (basic and acidic residues) spans 456–465; it reads DQEHGHKENK. 2 stretches are compositionally biased toward polar residues: residues 487 to 498 and 506 to 529; these read KDVSQSSLSFQT and SQIQTPNPNQDQWSGLNAKGNSGK. A compositionally biased stretch (basic and acidic residues) spans 530–546; the sequence is SADREQDLLSHEQESRY. A compositionally biased stretch (polar residues) spans 547 to 557; that stretch reads QQKSSGAHNTV.

It belongs to the semenogelin family. In terms of assembly, interacts with SERPINA5.

It is found in the secreted. Its function is as follows. Participates in the formation of a gel matrix (sperm coagulum) entrapping the accessory gland secretions and ejaculated spermatozoa. This is Semenogelin-2 (SEMG2) from Colobus guereza (Mantled guereza).